Reading from the N-terminus, the 655-residue chain is p-hydroxybenzoic acid efflux pump subunit AaeB (655 aa).

A run of 11 helical transmembrane segments spans residues 13–33 (FAVK…HFQL), 38–58 (WAVL…GGEP), 69–89 (LRII…IAMI), 93–113 (LLMI…SSLV), 121–141 (WGLA…EPLL), 152–172 (EIVI…PRSI), 370–390 (LFWL…IAVV), 407–427 (FIYG…VIIP), 431–451 (QSML…GIEV), 459–479 (MGAL…TFHF), and 482–502 (FLDS…VILL).

It belongs to the aromatic acid exporter ArAE (TC 2.A.85) family.

It localises to the cell inner membrane. Its function is as follows. Forms an efflux pump with AaeA. Could function as a metabolic relief valve, allowing to eliminate certain compounds when they accumulate to high levels in the cell. The sequence is that of p-hydroxybenzoic acid efflux pump subunit AaeB from Escherichia coli (strain K12 / MC4100 / BW2952).